Here is a 284-residue protein sequence, read N- to C-terminus: Diaminopimelate epimerase (284 aa).

Residues Asn14 and Asn67 each contribute to the substrate site. Cys76 acts as the Proton donor in catalysis. Substrate is bound by residues 77–78 (GN), Asn166, Asn199, and 217–218 (ER). Catalysis depends on Cys226, which acts as the Proton acceptor. Residue 227-228 (GT) coordinates substrate.

Belongs to the diaminopimelate epimerase family. In terms of assembly, homodimer.

The protein resides in the cytoplasm. It catalyses the reaction (2S,6S)-2,6-diaminopimelate = meso-2,6-diaminopimelate. It participates in amino-acid biosynthesis; L-lysine biosynthesis via DAP pathway; DL-2,6-diaminopimelate from LL-2,6-diaminopimelate: step 1/1. In terms of biological role, catalyzes the stereoinversion of LL-2,6-diaminopimelate (L,L-DAP) to meso-diaminopimelate (meso-DAP), a precursor of L-lysine and an essential component of the bacterial peptidoglycan. The chain is Diaminopimelate epimerase from Bacillus velezensis (strain DSM 23117 / BGSC 10A6 / LMG 26770 / FZB42) (Bacillus amyloliquefaciens subsp. plantarum).